Reading from the N-terminus, the 413-residue chain is Putative competence-damage inducible protein (413 aa).

The protein belongs to the CinA family.

This Lacticaseibacillus paracasei (strain ATCC 334 / BCRC 17002 / CCUG 31169 / CIP 107868 / KCTC 3260 / NRRL B-441) (Lactobacillus paracasei) protein is Putative competence-damage inducible protein.